The primary structure comprises 168 residues: MPRSRINGNFIDKTSSIVANILLRIIPTTSGEKEAFTYYRDGMSAQSEGNYAEALQNYYEAMRLEIDPYDRSYILYNIGLIHTSNGEHTKALEYYFRALERNPFLPQAFNNMAVICHYRGEQAIRQGDSEIAEAWSDQAAEYWKQAIALTPGNYIEAHNWLKITRRFE.

TPR repeat units follow at residues 35–68 (AFTY…EIDP), 72–105 (SYIL…NPFL), and 120–153 (GEQA…TPGN).

This sequence belongs to the Ycf3 family.

It localises to the plastid. The protein resides in the chloroplast thylakoid membrane. Essential for the assembly of the photosystem I (PSI) complex. May act as a chaperone-like factor to guide the assembly of the PSI subunits. The polypeptide is Photosystem I assembly protein Ycf3 (Drimys granadensis).